The following is a 176-amino-acid chain: NAD(P)H-quinone oxidoreductase subunit 6, chloroplastic (176 aa).

5 helical membrane-spanning segments follow: residues 10-30 (FLLV…VLLP), 32-52 (PIFS…LYIL), 61-81 (AQLL…VMFM), 92-112 (LWTI…FLLM), and 152-172 (FFLP…GAIS).

It belongs to the complex I subunit 6 family. In terms of assembly, NDH is composed of at least 16 different subunits, 5 of which are encoded in the nucleus.

The protein resides in the plastid. Its subcellular location is the chloroplast thylakoid membrane. It catalyses the reaction a plastoquinone + NADH + (n+1) H(+)(in) = a plastoquinol + NAD(+) + n H(+)(out). The catalysed reaction is a plastoquinone + NADPH + (n+1) H(+)(in) = a plastoquinol + NADP(+) + n H(+)(out). In terms of biological role, NDH shuttles electrons from NAD(P)H:plastoquinone, via FMN and iron-sulfur (Fe-S) centers, to quinones in the photosynthetic chain and possibly in a chloroplast respiratory chain. The immediate electron acceptor for the enzyme in this species is believed to be plastoquinone. Couples the redox reaction to proton translocation, and thus conserves the redox energy in a proton gradient. The sequence is that of NAD(P)H-quinone oxidoreductase subunit 6, chloroplastic (ndhG) from Arabidopsis thaliana (Mouse-ear cress).